Here is a 234-residue protein sequence, read N- to C-terminus: UPF0502 protein Reut_B4455 (234 aa).

Belongs to the UPF0502 family.

This is UPF0502 protein Reut_B4455 from Cupriavidus pinatubonensis (strain JMP 134 / LMG 1197) (Cupriavidus necator (strain JMP 134)).